The chain runs to 645 residues: Cell pattern formation-associated protein stuA (645 aa).

The tract at residues 1–52 (MNQMQPYADVHQPHMSTAAHAPASGPPAGLSHYSYPHQPSMMQPQQQQHQYG) is disordered. The span at 18 to 52 (AAHAPASGPPAGLSHYSYPHQPSMMQPQQQQHQYG) shows a compositional bias: low complexity. The HTH APSES-type domain maps to 124-230 (RVTATLWEDE…HDIGALLYHP (107 aa)). The H-T-H motif DNA-binding region spans 158–179 (GTKLLNVAGMTRGRRDGILKSE). Positions 246–645 (VDRNRRPDSM…HTLAAQRARR (400 aa)) are disordered. Polar residues-rich tracts occupy residues 254–271 (SMQT…SQAP) and 279–288 (MTNSVGSAMS). Residues 317-330 (SASSMMGMGNQGSS) are compositionally biased toward low complexity. The segment covering 336–365 (ANVQQHPQGNQPLSIDTGLSNARSVPTTPA) has biased composition (polar residues). Over residues 469–481 (PYNGNRGPYGYNP) the composition is skewed to low complexity. Composition is skewed to polar residues over residues 502–542 (SPHQ…NLYN) and 569–584 (YASQ…NSSG). The nuclear localization domain stretch occupies residues 585-613 (KRGRDEEDAETYRPDSVQGDDMGGLKRRK). A compositionally biased stretch (basic and acidic residues) spans 586 to 597 (RGRDEEDAETYR).

It belongs to the EFG1/PHD1/stuA family.

The protein resides in the nucleus. Functionally, transcription factor that regulates asexual reproduction. Binds the StuA-response elements (StRE) with the consensus sequence 5'-(A/T)CGCG(T/A)N(A/C)-3' at the promoters of target genes. Regulates the expression of several effector genes (AvrLm1, AvrLm6 and AvrLm4-7) during infection stage. In Leptosphaeria maculans (strain JN3 / isolate v23.1.3 / race Av1-4-5-6-7-8) (Blackleg fungus), this protein is Cell pattern formation-associated protein stuA.